The chain runs to 102 residues: ATP-dependent Clp protease adapter protein ClpS (102 aa).

This sequence belongs to the ClpS family. As to quaternary structure, binds to the N-terminal domain of the chaperone ClpA.

Its function is as follows. Involved in the modulation of the specificity of the ClpAP-mediated ATP-dependent protein degradation. This Herminiimonas arsenicoxydans protein is ATP-dependent Clp protease adapter protein ClpS.